We begin with the raw amino-acid sequence, 205 residues long: Listeria nuclear targeted protein A (205 aa).

An N-terminal signal peptide occupies residues 1–36 (MKKLVAWFNGLSKMWKVVVIIGAVFVVIIALTTGED).

As to quaternary structure, interacts specifically with host BAHD1.

Its subcellular location is the secreted. It is found in the host nucleus. Its function is as follows. Relieves the repression of host cell immune response genes (interferon-stimulated genes) by blocking the recruitment of host BAHD1 to these genes. May modulate interferon-mediated immune response to control bacterial colonization of the host. This chain is Listeria nuclear targeted protein A (lntA), found in Listeria monocytogenes serovar 1/2a (strain ATCC BAA-679 / EGD-e).